Consider the following 192-residue polypeptide: MSEIVNLSSSLRSLNPKISPLVPPYRQTSSSFSRPRNFKYHSFTDKICLAAERIRAVDIQKQDGGLQELDDSPVSVELGPICGESHFDQVMEDAQKLGESVVIVWMAAWCRKCIYLKPKLEKLAAEFYPRLRFYHVDVNAVPYRLVSRAGVTKMPTIQLWRDGQKQAEVIGGHKAHFVVNEVREMIENDSIT.

The transit peptide at 1-55 (MSEIVNLSSSLRSLNPKISPLVPPYRQTSSSFSRPRNFKYHSFTDKICLAAERIR) directs the protein to the chloroplast. Residues 66 to 191 (LQELDDSPVS…VREMIENDSI (126 aa)) enclose the Thioredoxin domain. Active-site nucleophile residues include Cys110 and Cys113. Residues Cys110 and Cys113 are joined by a disulfide bond.

It belongs to the thioredoxin family.

Its subcellular location is the plastid. It is found in the chloroplast stroma. Functionally, probable thiol-disulfide oxidoreductase that may participate in various redox reactions. The sequence is that of Thioredoxin-like 3-2, chloroplastic (WCRKC2) from Arabidopsis thaliana (Mouse-ear cress).